The following is a 611-amino-acid chain: Elongation factor 4 (611 aa).

The region spanning 11–193 (EKIRNFSIIA…QVVEYVPAPS (183 aa)) is the tr-type G domain. Residues 23-28 (DHGKST) and 140-143 (NKID) contribute to the GTP site.

Belongs to the TRAFAC class translation factor GTPase superfamily. Classic translation factor GTPase family. LepA subfamily.

The protein resides in the cell membrane. The enzyme catalyses GTP + H2O = GDP + phosphate + H(+). Its function is as follows. Required for accurate and efficient protein synthesis under certain stress conditions. May act as a fidelity factor of the translation reaction, by catalyzing a one-codon backward translocation of tRNAs on improperly translocated ribosomes. Back-translocation proceeds from a post-translocation (POST) complex to a pre-translocation (PRE) complex, thus giving elongation factor G a second chance to translocate the tRNAs correctly. Binds to ribosomes in a GTP-dependent manner. The chain is Elongation factor 4 from Enterococcus faecalis (strain ATCC 700802 / V583).